The following is a 338-amino-acid chain: uncharacterized protein (338 aa).

The N-terminal stretch at 1–29 (MIKQLYKNITICTLALSTTFTVLPATSYA) is a signal peptide.

Belongs to the aerolysin family.

This is an uncharacterized protein from Staphylococcus aureus (strain MSSA476).